We begin with the raw amino-acid sequence, 325 residues long: UPF0285 protein MmarC6_0247 (325 aa).

This sequence belongs to the UPF0285 family.

This chain is UPF0285 protein MmarC6_0247, found in Methanococcus maripaludis (strain C6 / ATCC BAA-1332).